The chain runs to 568 residues: Putative DEAD-box RNA helicase HEL64 (568 aa).

The tract at residues 1–34 (MEETYSPFTGRQGQYNQGYNGGGRRDSRGGMGER) is disordered. Residues 23–34 (GRRDSRGGMGER) are compositionally biased toward basic and acidic residues. A Q motif motif is present at residues 102–130 (FDHLCGIVPPYLLKKLTAQNFTAPTPVQA). The 175-residue stretch at 133 to 307 (WPVLLSGRDL…AEFQKQWIRI (175 aa)) folds into the Helicase ATP-binding domain. ATP is bound at residue 146 to 153 (AKTGSGKT). The DEAD box signature appears at 255–258 (DEAD). In terms of domain architecture, Helicase C-terminal spans 335–483 (ELRKLMQEHR…EIPDWMIEWN (149 aa)).

Belongs to the DEAD box helicase family. DDX5/DBP2 subfamily.

The protein resides in the nucleus. It catalyses the reaction ATP + H2O = ADP + phosphate + H(+). The sequence is that of Putative DEAD-box RNA helicase HEL64 (HEL64) from Trypanosoma brucei brucei.